The primary structure comprises 590 residues: Aspartate--tRNA(Asp/Asn) ligase (590 aa).

E173 is a binding site for L-aspartate. An aspartate region spans residues 197–200 (QIFK). R219 provides a ligand contact to L-aspartate. ATP-binding positions include 219 to 221 (RDE) and Q228. H450 is an L-aspartate binding site. E484 is a binding site for ATP. R491 is an L-aspartate binding site. An ATP-binding site is contributed by 536 to 539 (GLDR).

The protein belongs to the class-II aminoacyl-tRNA synthetase family. Type 1 subfamily. In terms of assembly, homodimer.

It localises to the cytoplasm. It carries out the reaction tRNA(Asx) + L-aspartate + ATP = L-aspartyl-tRNA(Asx) + AMP + diphosphate. In terms of biological role, aspartyl-tRNA synthetase with relaxed tRNA specificity since it is able to aspartylate not only its cognate tRNA(Asp) but also tRNA(Asn). Reaction proceeds in two steps: L-aspartate is first activated by ATP to form Asp-AMP and then transferred to the acceptor end of tRNA(Asp/Asn). In Coxiella burnetii (strain RSA 331 / Henzerling II), this protein is Aspartate--tRNA(Asp/Asn) ligase.